The sequence spans 101 residues: Putative antitoxin HigA2 (101 aa).

One can recognise an HTH cro/C1-type domain in the interval Leu-35–Thr-90. Residues Gln-46 to Asn-65 constitute a DNA-binding region (H-T-H motif).

Its function is as follows. Putative antitoxin component of a type II toxin-antitoxin (TA) system. Its cognate toxin would be HigB2. The chain is Putative antitoxin HigA2 from Mycobacterium tuberculosis (strain ATCC 25618 / H37Rv).